Reading from the N-terminus, the 260-residue chain is Late transcription factor 1 (260 aa).

It belongs to the chordopoxvirinae VLTF-1 family. As to quaternary structure, interacts with the late transcription factors VLTF-2 and VLTF-3. Interacts with the late transcription elongation factor VLTF-4. Interacts with itself.

In terms of biological role, associates with RNA polymerase to initiate transcription from late gene promoters. The chain is Late transcription factor 1 (OPG093) from Vaccinia virus (strain Ankara) (VACV).